An 837-amino-acid chain; its full sequence is WW domain-containing protein tag-325 (837 aa).

Positions 1 to 11 (MTTAVQPSDTT) are enriched in polar residues. The interval 1–66 (MTTAVQPSDT…SNGQNYADDP (66 aa)) is disordered. Low complexity predominate over residues 33-43 (SESAESSSSSS). The segment covering 44–61 (QTNVSAANTLPRESNGQN) has biased composition (polar residues). In terms of domain architecture, WW spans 96–129 (RDLLNGWFEYETDVGRTFFFNKETGKSQWIPPRF). The segment covering 150-161 (TCSFQGSSTSSS) has biased composition (low complexity). 5 disordered regions span residues 150-181 (TCSFQGSSTSSSEEQKENKMRESLADDDRKSQ), 194-257 (DDVD…STAS), 338-403 (TTSS…EPAE), 548-574 (MRRRDDPMSQSAIETVSTSVSTDEPRP), and 778-800 (KNKKAGKKAKPSKKEETQATPVQ). Residues 162 to 181 (EEQKENKMRESLADDDRKSQ) are compositionally biased toward basic and acidic residues. A compositionally biased stretch (polar residues) spans 247–257 (PTSSRKASTAS). Residues 371–403 (RCEERRGSGDGREPVRTIRCGDLERSENDEPAE) are compositionally biased toward basic and acidic residues. The PH domain occupies 386–505 (RTIRCGDLER…WYKSLEEVVA (120 aa)). Residues 556 to 569 (SQSAIETVSTSVST) show a composition bias toward polar residues. A Rho-GAP domain is found at 610 to 827 (STLSAICQHE…YLLESANKFD (218 aa)). Over residues 778 to 788 (KNKKAGKKAKP) the composition is skewed to basic residues.

This is WW domain-containing protein tag-325 (tag-325) from Caenorhabditis elegans.